Reading from the N-terminus, the 204-residue chain is Molybdenum cofactor guanylyltransferase (204 aa).

Residues 12 to 14 (LAG), K25, N53, D71, and D101 each bind GTP. Residue D101 coordinates Mg(2+).

This sequence belongs to the MobA family. Monomer. Mg(2+) serves as cofactor.

It is found in the cytoplasm. The enzyme catalyses Mo-molybdopterin + GTP + H(+) = Mo-molybdopterin guanine dinucleotide + diphosphate. Functionally, transfers a GMP moiety from GTP to Mo-molybdopterin (Mo-MPT) cofactor (Moco or molybdenum cofactor) to form Mo-molybdopterin guanine dinucleotide (Mo-MGD) cofactor. This chain is Molybdenum cofactor guanylyltransferase, found in Ralstonia pickettii (strain 12J).